The chain runs to 247 residues: MLIQILTIHPAIVAPVFRESILGRACEAGILDLRVVNIRDFALSKHQQTDDYPYGGGAGLLMKPEPVFGAVRWAAGRAPAGARPPRVILMDPQGRRFDQRYAEELAREDHLILICGRYEGFDERIRALATDEISIGDYVLMGGEVAALVVVEAVTRLIPGVLGDLESSVAESHTSGLLEGPQYTRPAEFEGMRVPEILTSGNHGAIARWRREQALRRTFERRPDLLQSADLTPEERRLVEAWRTRQS.

S-adenosyl-L-methionine contacts are provided by residues glycine 116 and 135–140; that span reads IGDYVL.

Belongs to the RNA methyltransferase TrmD family. As to quaternary structure, homodimer.

Its subcellular location is the cytoplasm. It carries out the reaction guanosine(37) in tRNA + S-adenosyl-L-methionine = N(1)-methylguanosine(37) in tRNA + S-adenosyl-L-homocysteine + H(+). Specifically methylates guanosine-37 in various tRNAs. The polypeptide is tRNA (guanine-N(1)-)-methyltransferase (Symbiobacterium thermophilum (strain DSM 24528 / JCM 14929 / IAM 14863 / T)).